A 191-amino-acid chain; its full sequence is Large ribosomal subunit protein uL3 (191 aa).

Positions 115 to 137 (GGPASHGSRFHRRHGSIGNREWP) are disordered.

This sequence belongs to the universal ribosomal protein uL3 family. As to quaternary structure, part of the 50S ribosomal subunit. Forms a cluster with proteins L14 and L19.

In terms of biological role, one of the primary rRNA binding proteins, it binds directly near the 3'-end of the 23S rRNA, where it nucleates assembly of the 50S subunit. In Campylobacter jejuni subsp. jejuni serotype O:2 (strain ATCC 700819 / NCTC 11168), this protein is Large ribosomal subunit protein uL3 (rplC).